The primary structure comprises 467 residues: tRNA(Ile)-lysidine synthase (467 aa).

35-40 (SGGPDS) is an ATP binding site.

Belongs to the tRNA(Ile)-lysidine synthase family.

The protein localises to the cytoplasm. It catalyses the reaction cytidine(34) in tRNA(Ile2) + L-lysine + ATP = lysidine(34) in tRNA(Ile2) + AMP + diphosphate + H(+). Functionally, ligates lysine onto the cytidine present at position 34 of the AUA codon-specific tRNA(Ile) that contains the anticodon CAU, in an ATP-dependent manner. Cytidine is converted to lysidine, thus changing the amino acid specificity of the tRNA from methionine to isoleucine. The polypeptide is tRNA(Ile)-lysidine synthase (Caldanaerobacter subterraneus subsp. tengcongensis (strain DSM 15242 / JCM 11007 / NBRC 100824 / MB4) (Thermoanaerobacter tengcongensis)).